A 197-amino-acid chain; its full sequence is Ribosomal RNA large subunit methyltransferase E (197 aa).

Residues G52, W54, D72, D88, and D112 each contribute to the S-adenosyl-L-methionine site. The Proton acceptor role is filled by K152.

Belongs to the class I-like SAM-binding methyltransferase superfamily. RNA methyltransferase RlmE family.

The protein localises to the cytoplasm. The enzyme catalyses uridine(2552) in 23S rRNA + S-adenosyl-L-methionine = 2'-O-methyluridine(2552) in 23S rRNA + S-adenosyl-L-homocysteine + H(+). Functionally, specifically methylates the uridine in position 2552 of 23S rRNA at the 2'-O position of the ribose in the fully assembled 50S ribosomal subunit. In Nitrosopumilus maritimus (strain SCM1), this protein is Ribosomal RNA large subunit methyltransferase E.